The chain runs to 1090 residues: Protein unc-13 homolog D (1090 aa).

One can recognise a C2 1 domain in the interval 92–239 (EPEEHQQTLQ…FKEARKDKGQ (148 aa)). 2 residues coordinate Ca(2+): aspartate 127 and aspartate 133. A Phosphoserine modification is found at serine 150. Positions 206 and 208 each coordinate Ca(2+). Residues 240–543 (DDFLGNVVLR…AKRVQDHTTV (304 aa)) are interaction with RAB27A. Residues 557-677 (FQLYISLKEL…RLALVYCSLI (121 aa)) form the MHD1 domain. One can recognise an MHD2 domain in the interval 788-895 (EDAILPLMKF…ASSRELIRKY (108 aa)). The region spanning 910–1035 (ELGAVTVKAS…PGLSGSEEPG (126 aa)) is the C2 2 domain. Residues leucine 940, aspartate 941, aspartate 947, aspartate 1005, aspartate 1007, and aspartate 1013 each contribute to the Ca(2+) site. The segment at 1026 to 1048 (PGLSGSEEPGEVPQTRLPLTYPA) is disordered.

The protein belongs to the unc-13 family. In terms of assembly, interacts with DOC2A. Interacts with RAB27A. Interacts with RHOG; the interaction increases RhoG affinity to the membrane lipids, targets UNC13D to membrane lipids and facilitates cytotoxic granule (CG) docking to the plasma membrane. Ca(2+) serves as cofactor. As to expression, expressed at high levels in spleen, thymus and leukocytes. Also expressed in lung and placenta, and at very low levels in brain, heart, skeletal muscle and kidney. Expressed in cytotoxic T-lymphocytes (CTL) and mast cells.

Its subcellular location is the cytoplasm. The protein localises to the membrane. It is found in the late endosome. It localises to the recycling endosome. The protein resides in the lysosome. In terms of biological role, plays a role in cytotoxic granule exocytosis in lymphocytes. Required for both granule maturation and granule docking and priming at the immunologic synapse. Regulates assembly of recycling and late endosomal structures, leading to the formation of an endosomal exocytic compartment that fuses with perforin-containing granules at the immunologic synapse and licences them for exocytosis. Regulates Ca(2+)-dependent secretory lysosome exocytosis in mast cells. The sequence is that of Protein unc-13 homolog D (UNC13D) from Homo sapiens (Human).